The sequence spans 476 residues: Stromelysin-2 (476 aa).

The signal sequence occupies residues 1–17; sequence MEPLAILALLSLPICSA. A propeptide spans 18–99 (activation peptide); sequence YPLHGAVTQG…PRCGVPDVGG (82 aa). Positions 90 to 97 match the Cysteine switch motif; sequence PRCGVPDV. Zn(2+)-binding residues include C92, H168, D170, H183, H196, and H218. E219 is an active-site residue. 2 residues coordinate Zn(2+): H222 and H228. Hemopexin repeat units lie at residues 286–335, 336–382, 384–432, and 433–476; these read PDKC…WPTL, PSDL…GFPP, VKKI…FPGI, and EPQV…WLLC. The cysteines at positions 289 and 476 are disulfide-linked.

It belongs to the peptidase M10A family. It depends on Zn(2+) as a cofactor. The cofactor is Ca(2+). Expressed in small intestine. Weak levels in heart and lung.

Its subcellular location is the secreted. It is found in the extracellular space. The protein localises to the extracellular matrix. It catalyses the reaction Similar to stromelysin 1, but action on collagen types III, IV and V is weak.. Its function is as follows. Can degrade fibronectin, gelatins of type I, III, IV, and V; weakly collagens III, IV, and V. Activates procollagenase. This chain is Stromelysin-2 (Mmp10), found in Mus musculus (Mouse).